The following is a 147-amino-acid chain: Nucleoside diphosphate kinase (147 aa).

Residues Lys11, Phe59, Arg87, Thr93, Arg104, and Asn114 each coordinate ATP. His117 serves as the catalytic Pros-phosphohistidine intermediate.

The protein belongs to the NDK family. Homotetramer. Requires Mg(2+) as cofactor.

It localises to the cytoplasm. It carries out the reaction a 2'-deoxyribonucleoside 5'-diphosphate + ATP = a 2'-deoxyribonucleoside 5'-triphosphate + ADP. It catalyses the reaction a ribonucleoside 5'-diphosphate + ATP = a ribonucleoside 5'-triphosphate + ADP. Major role in the synthesis of nucleoside triphosphates other than ATP. The ATP gamma phosphate is transferred to the NDP beta phosphate via a ping-pong mechanism, using a phosphorylated active-site intermediate. This is Nucleoside diphosphate kinase from Anaeromyxobacter sp. (strain K).